A 479-amino-acid chain; its full sequence is Ammonium transporter 3 member 2 (479 aa).

11 helical membrane passes run 34–54 (VAAT…YGGV), 59–79 (WAVN…ICWV), 139–159 (VVYF…GSLL), 164–184 (FLAW…VGAF), 202–222 (GGYV…YWVG), 237–257 (ILFT…FNGG), 272–292 (NTNI…VIFF), 297–317 (VVGA…AAGV), 321–341 (WAAL…MMIL), 355–375 (LGVF…TGLF), and 407–427 (IAGG…ICLA).

It belongs to the ammonia transporter channel (TC 1.A.11.2) family.

It is found in the membrane. In terms of biological role, involved in ammonium transport. The chain is Ammonium transporter 3 member 2 (AMT3-2) from Oryza sativa subsp. japonica (Rice).